Reading from the N-terminus, the 197-residue chain is Peptide deformylase (197 aa).

Residues Cys106 and His148 each coordinate Fe cation. Glu149 is a catalytic residue. A Fe cation-binding site is contributed by His152.

It belongs to the polypeptide deformylase family. It depends on Fe(2+) as a cofactor.

The enzyme catalyses N-terminal N-formyl-L-methionyl-[peptide] + H2O = N-terminal L-methionyl-[peptide] + formate. Removes the formyl group from the N-terminal Met of newly synthesized proteins. Requires at least a dipeptide for an efficient rate of reaction. N-terminal L-methionine is a prerequisite for activity but the enzyme has broad specificity at other positions. This Mycobacterium tuberculosis (strain ATCC 25177 / H37Ra) protein is Peptide deformylase.